Reading from the N-terminus, the 199-residue chain is Recombination protein RecR (199 aa).

The C4-type zinc-finger motif lies at 56–71 (CAICGNVAEHEQCRIC). In terms of domain architecture, Toprim spans 79–174 (TVLCVVEEPK…RVTRLASGLP (96 aa)).

It belongs to the RecR family.

Its function is as follows. May play a role in DNA repair. It seems to be involved in an RecBC-independent recombinational process of DNA repair. It may act with RecF and RecO. In Acidothermus cellulolyticus (strain ATCC 43068 / DSM 8971 / 11B), this protein is Recombination protein RecR.